The sequence spans 793 residues: Lon protease 1 (793 aa).

The Lon N-terminal domain maps to 8–202 (VPVIPLKNSV…KLLDRLQELK (195 aa)). 354–361 (GPPGVGKT) is an ATP binding site. Residues 590–770 (LLPPGVVTGL…NEVLKITLGV (181 aa)) form the Lon proteolytic domain. Catalysis depends on residues S676 and K719.

It belongs to the peptidase S16 family. In terms of assembly, homohexamer. Organized in a ring with a central cavity.

The protein localises to the cytoplasm. The catalysed reaction is Hydrolysis of proteins in presence of ATP.. In terms of biological role, ATP-dependent serine protease that mediates the selective degradation of mutant and abnormal proteins as well as certain short-lived regulatory proteins. Required for cellular homeostasis and for survival from DNA damage and developmental changes induced by stress. Degrades polypeptides processively to yield small peptide fragments that are 5 to 10 amino acids long. Binds to DNA in a double-stranded, site-specific manner. This chain is Lon protease 1, found in Bdellovibrio bacteriovorus (strain ATCC 15356 / DSM 50701 / NCIMB 9529 / HD100).